We begin with the raw amino-acid sequence, 616 residues long: Dihydroxy-acid dehydratase (616 aa).

D81 is a binding site for Mg(2+). C122 is a binding site for [2Fe-2S] cluster. Mg(2+) contacts are provided by D123 and K124. The residue at position 124 (K124) is an N6-carboxylysine. Residue C195 participates in [2Fe-2S] cluster binding. E491 contributes to the Mg(2+) binding site. S517 (proton acceptor) is an active-site residue.

The protein belongs to the IlvD/Edd family. As to quaternary structure, homodimer. The cofactor is [2Fe-2S] cluster. Mg(2+) is required as a cofactor.

The enzyme catalyses (2R)-2,3-dihydroxy-3-methylbutanoate = 3-methyl-2-oxobutanoate + H2O. It carries out the reaction (2R,3R)-2,3-dihydroxy-3-methylpentanoate = (S)-3-methyl-2-oxopentanoate + H2O. It participates in amino-acid biosynthesis; L-isoleucine biosynthesis; L-isoleucine from 2-oxobutanoate: step 3/4. The protein operates within amino-acid biosynthesis; L-valine biosynthesis; L-valine from pyruvate: step 3/4. Functions in the biosynthesis of branched-chain amino acids. Catalyzes the dehydration of (2R,3R)-2,3-dihydroxy-3-methylpentanoate (2,3-dihydroxy-3-methylvalerate) into 2-oxo-3-methylpentanoate (2-oxo-3-methylvalerate) and of (2R)-2,3-dihydroxy-3-methylbutanoate (2,3-dihydroxyisovalerate) into 2-oxo-3-methylbutanoate (2-oxoisovalerate), the penultimate precursor to L-isoleucine and L-valine, respectively. The chain is Dihydroxy-acid dehydratase from Methylocella silvestris (strain DSM 15510 / CIP 108128 / LMG 27833 / NCIMB 13906 / BL2).